Consider the following 134-residue polypeptide: Small ribosomal subunit protein bS6 (134 aa).

A disordered region spans residues 103-134 (AAPVKSAEEGTEEVAAEAATEAPAETTTTVEV). A compositionally biased stretch (low complexity) spans 118-134 (AEAATEAPAETTTTVEV).

Belongs to the bacterial ribosomal protein bS6 family.

Functionally, binds together with bS18 to 16S ribosomal RNA. In Geobacter sp. (strain M21), this protein is Small ribosomal subunit protein bS6.